Consider the following 686-residue polypeptide: Bromodomain-containing factor 1 (686 aa).

Disordered stretches follow at residues 1 to 69 and 85 to 150; these read MTDI…PAGL and NGYN…NPIP. The segment covering 9-25 has biased composition (low complexity); sequence NDVDVNGNNVNDDVSSN. Residues 99–120 show a composition bias toward basic and acidic residues; it reads QGLKKEEGGQGTKQEDLDENSK. A compositionally biased stretch (pro residues) spans 130–139; sequence EPAPAPPPEP. Residues 145-254 enclose the Bromo 1 domain; that stretch reads PQNPIPKHQQ…ASFEKHMLNM (110 aa). Ser270 bears the Phosphoserine mark. The interval 283–304 is disordered; sequence QTHNGRPKRTIHPPKSKDIYPY. Positions 287–296 are enriched in basic residues; it reads GRPKRTIHPP. The Bromo 2 domain maps to 312-421; that stretch reads KRLQQAMKFC…EVFNSKWADR (110 aa). Disordered stretches follow at residues 424 to 447, 486 to 523, 594 to 636, and 649 to 686; these read LDDY…SEYS, IRKE…KKNK, SSGA…EQSR, and DSAS…SEEE. Ser429 carries the post-translational modification Phosphoserine. Acidic residues predominate over residues 438–447; that stretch reads DYDDYESEYS. Residues 460–499 adopt a coiled-coil conformation; it reads AIQYLEEQLARMKVELQQLKKQELEKIRKERRLARGSKKR. Over residues 488–507 the composition is skewed to basic residues; that stretch reads KERRLARGSKKRGKRSKGRS. The region spanning 518-598 is the NET domain; the sequence is RDKKNKLKTV…RQYESSSGAS (81 aa). Polar residues-rich tracts occupy residues 594 to 620 and 652 to 671; these read SSGA…TSAG and SPLS…HNGF. Phosphoserine is present on residues Ser615 and Ser659. The span at 675–686 shows a compositional bias: acidic residues; sequence SDDDVSSESEEE.

This sequence belongs to the BET family. As to quaternary structure, interacts with the TFIID subunit TAF7 and with acetylated histones H3 and H4. Post-translationally, phosphorylated by the casein kinase CK2 complex.

The protein localises to the nucleus. In terms of biological role, transcription factor involved in the expression of a broad class of genes including snRNAs. Required for sporulation and DNA-damage repair. Prevents the spreading of SIR silencing at telomeres and protects histone H4, but not H3, from deacetylation. In Saccharomyces cerevisiae (strain ATCC 204508 / S288c) (Baker's yeast), this protein is Bromodomain-containing factor 1 (BDF1).